Reading from the N-terminus, the 262-residue chain is MLDPIAIQLGPLAIRWYALCIVTGLILAVYLTMKEAPRKKIIPDDILDFILVAFPLAILGARLYYVIFRFDYYSQNLGEIFAIWNGGLAIYGGLITGALVLYIFADRKLINTWDFLDIAAPSVMIAQSLGRWGNFFNQEAYGATVDNLDYLPGFIRDQMYIEGSYRQPTFLYESLWNLLGFALILIFRRKWKSLRRGHITAFYLIWYGFGRMVIEGMRTDSLMFFGLRVSQWLSVVFIGLGIMIVIYQNRKKAPYYITEEEK.

A run of 4 helical transmembrane segments spans residues 9-29 (LGPLAIRWYALCIVTGLILAV), 41-61 (IIPDDILDFILVAFPLAILGA), 80-100 (IFAIWNGGLAIYGGLITGALV), and 109-129 (LINTWDFLDIAAPSVMIAQSL). Arg131 serves as a coordination point for a 1,2-diacyl-sn-glycero-3-phospho-(1'-sn-glycerol). The next 3 membrane-spanning stretches (helical) occupy residues 167 to 187 (QPTFLYESLWNLLGFALILIF), 197 to 217 (GHITAFYLIWYGFGRMVIEGM), and 226 to 246 (GLRVSQWLSVVFIGLGIMIVI).

The protein belongs to the Lgt family.

The protein resides in the cell membrane. It carries out the reaction L-cysteinyl-[prolipoprotein] + a 1,2-diacyl-sn-glycero-3-phospho-(1'-sn-glycerol) = an S-1,2-diacyl-sn-glyceryl-L-cysteinyl-[prolipoprotein] + sn-glycerol 1-phosphate + H(+). Its pathway is protein modification; lipoprotein biosynthesis (diacylglyceryl transfer). Functionally, catalyzes the transfer of the diacylglyceryl group from phosphatidylglycerol to the sulfhydryl group of the N-terminal cysteine of a prolipoprotein, the first step in the formation of mature lipoproteins. The sequence is that of Phosphatidylglycerol--prolipoprotein diacylglyceryl transferase from Streptococcus pneumoniae (strain ATCC 700669 / Spain 23F-1).